We begin with the raw amino-acid sequence, 335 residues long: Succinylglutamate desuccinylase (335 aa).

Positions 59, 62, and 151 each coordinate Zn(2+). The active site involves glutamate 215.

Belongs to the AspA/AstE family. Succinylglutamate desuccinylase subfamily. Zn(2+) serves as cofactor.

It carries out the reaction N-succinyl-L-glutamate + H2O = L-glutamate + succinate. The protein operates within amino-acid degradation; L-arginine degradation via AST pathway; L-glutamate and succinate from L-arginine: step 5/5. In terms of biological role, transforms N(2)-succinylglutamate into succinate and glutamate. The chain is Succinylglutamate desuccinylase from Pseudomonas syringae pv. tomato (strain ATCC BAA-871 / DC3000).